A 474-amino-acid polypeptide reads, in one-letter code: PRAME family member 8 (474 aa).

An LRR 1; degenerate repeat occupies 97-122 (QSKLQVLDLRNVDENFCDIFSGATAS). Residues 177–201 (HVCCKELQVFGMPIHSIIEVLNMVE) form an LRR 2; degenerate repeat. An LRR 3; degenerate repeat occupies 202-228 (LDCIQEVEVCCPWELSTLVKFAPYLGQ). Residues 229–264 (MRNLRKLVLFNIRASACIPPDNKGQFIARFTSQFLK) form an LRR 4; degenerate repeat. LRR repeat units lie at residues 265 to 290 (LDYFQNLSMHSVSFLEGHLDQLLRCL), 291 to 322 (QASLEMVVMTDCLLSESDLKHLSWCPSIRQLK), 323 to 341 (ELDLRGVTLTHFSPEPLTG), 347 to 374 (VATLQTLDLEDCGIMDSQLSAILPVLSR), and 375 to 399 (CSQLSTFSFCGNLISMAALENLLRH).

The protein belongs to the PRAME family.

In Homo sapiens (Human), this protein is PRAME family member 8.